The following is a 252-amino-acid chain: 5'-nucleotidase SurE (252 aa).

A divalent metal cation-binding residues include D8, D9, S39, and N91.

It belongs to the SurE nucleotidase family. The cofactor is a divalent metal cation.

The protein resides in the cytoplasm. It carries out the reaction a ribonucleoside 5'-phosphate + H2O = a ribonucleoside + phosphate. Nucleotidase that shows phosphatase activity on nucleoside 5'-monophosphates. This Legionella pneumophila (strain Corby) protein is 5'-nucleotidase SurE.